A 61-amino-acid polypeptide reads, in one-letter code: MDPKLLDILACPLTKGPLVLSEDKSELISKQAGLAYPIRDGIPVMLESEARALNVDERLDK.

It belongs to the UPF0434 family.

The chain is UPF0434 protein PSPA7_2181 from Pseudomonas paraeruginosa (strain DSM 24068 / PA7) (Pseudomonas aeruginosa (strain PA7)).